The following is an 860-amino-acid chain: Leucine--tRNA ligase (860 aa).

The 'HIGH' region signature appears at 42 to 52; it reads PYPSGRLHMGH. A 'KMSKS' region motif is present at residues 619–623; the sequence is KMSKS. Residue lysine 622 coordinates ATP.

The protein belongs to the class-I aminoacyl-tRNA synthetase family.

It localises to the cytoplasm. It catalyses the reaction tRNA(Leu) + L-leucine + ATP = L-leucyl-tRNA(Leu) + AMP + diphosphate. The polypeptide is Leucine--tRNA ligase (Escherichia coli O7:K1 (strain IAI39 / ExPEC)).